The primary structure comprises 363 residues: Actin-related protein 7 (363 aa).

An N-acetylmethionine modification is found at methionine 1.

Belongs to the actin family. Plant ARP7 subfamily. As to expression, mostly expressed in flowers, and, to a lower extent, in roots, seedlings, leaves and siliques (at protein level).

The protein resides in the nucleus. Its subcellular location is the cytoplasm. Functionally, essential protein required during embryogenesis and all plant development stages, probably through a chromatin-mediated regulation of gene expression. The chain is Actin-related protein 7 (ARP7) from Arabidopsis thaliana (Mouse-ear cress).